The primary structure comprises 454 residues: Chromosomal replication initiator protein DnaA (454 aa).

A domain I, interacts with DnaA modulators region spans residues 1 to 76; that stretch reads MNKLKTDLNL…IGASFRILAK (76 aa). The segment at 76–113 is domain II; sequence KNPKIIFAQESPGNGEKATGKKIKSLPREDKSSIFESK. The segment at 114 to 330 is domain III, AAA+ region; it reads GLNTKFSFEN…GALNRLCAYA (217 aa). The ATP site is built by G158, G160, K161, and T162. The tract at residues 331–454 is domain IV, binds dsDNA; the sequence is SIHKEGKITL…KITEQLTSSQ (124 aa).

It belongs to the DnaA family. In terms of assembly, oligomerizes as a right-handed, spiral filament on DNA at oriC.

The protein resides in the cytoplasm. Its function is as follows. Plays an essential role in the initiation and regulation of chromosomal replication. ATP-DnaA binds to the origin of replication (oriC) to initiate formation of the DNA replication initiation complex once per cell cycle. Binds the DnaA box (a 9 base pair repeat at the origin) and separates the double-stranded (ds)DNA. Forms a right-handed helical filament on oriC DNA; dsDNA binds to the exterior of the filament while single-stranded (ss)DNA is stabiized in the filament's interior. The ATP-DnaA-oriC complex binds and stabilizes one strand of the AT-rich DNA unwinding element (DUE), permitting loading of DNA polymerase. After initiation quickly degrades to an ADP-DnaA complex that is not apt for DNA replication. Binds acidic phospholipids. This chain is Chromosomal replication initiator protein DnaA, found in Methylacidiphilum infernorum (isolate V4) (Methylokorus infernorum (strain V4)).